A 1353-amino-acid polypeptide reads, in one-letter code: DNA-directed RNA polymerase subunit beta' (1353 aa).

Residues 1–117 (MSDNRLFTSV…AFQKLNDLFK (117 aa)) form a unknown region. Residues 118–1353 (LYNHFPSISS…SELAEKTNQN (1236 aa)) are DNA-directed RNA polymerase subunit beta'. Positions 189, 191, 203, and 206 each coordinate Zn(2+). Mg(2+) is bound by residues aspartate 578, aspartate 580, and aspartate 582.

Belongs to the RNA polymerase beta' chain family. The RNAP catalytic core consists of 2 alpha, 1 beta, 1 beta' and 1 omega subunit. When a sigma factor is associated with the core the holoenzyme is formed, which can initiate transcription. It depends on Mg(2+) as a cofactor. Requires Zn(2+) as cofactor.

It carries out the reaction RNA(n) + a ribonucleoside 5'-triphosphate = RNA(n+1) + diphosphate. Functionally, DNA-dependent RNA polymerase catalyzes the transcription of DNA into RNA using the four ribonucleoside triphosphates as substrates. This is DNA-directed RNA polymerase subunit beta' from Onion yellows phytoplasma (strain OY-M).